The following is a 399-amino-acid chain: Transmembrane protein 237 homolog (399 aa).

Residues Met1 to Pro11 show a composition bias toward pro residues. Residues Met1–Lys158 form a disordered region. Composition is skewed to basic and acidic residues over residues Asn36–Asn45, Glu111–Arg135, and Lys144–Lys158. The next 4 membrane-spanning stretches (helical) occupy residues Ile222–Phe242, Met256–Ile276, Gly301–Leu321, and Val343–Pro363.

This sequence belongs to the TMEM237 family.

It is found in the membrane. Its subcellular location is the cell projection. The protein localises to the cilium. Component of the transition zone in primary cilia. Required for ciliogenesis. The sequence is that of Transmembrane protein 237 homolog from Caenorhabditis elegans.